Reading from the N-terminus, the 713-residue chain is Peroxisomal biogenesis factor 8 (713 aa).

The tract at residues 1–31 (MYRLGSQGRSIQSQLQNGDSSSGRPLQLQGT) is disordered. A compositionally biased stretch (polar residues) spans 7 to 30 (QGRSIQSQLQNGDSSSGRPLQLQG). The short motif at 711–713 (AKL) is the Microbody targeting signal element.

As to quaternary structure, interacts with PEX5 (via N-terminus).

Its subcellular location is the peroxisome membrane. In terms of biological role, essential component of the machinery required for the import of both PTS1 and PTS2 (and perhaps all) peroxisomal matrix proteins. Binding of PEX8 to the N-terminus of PEX5 cargo receptor induces a conformational change of the TPR domains and decrease their binding affinity to cargo, facilitating the release of the PTS1 proteins within the peroxisome. In Komagataella phaffii (strain GS115 / ATCC 20864) (Yeast), this protein is Peroxisomal biogenesis factor 8.